Consider the following 400-residue polypeptide: Phosphoglycerate kinase (400 aa).

Residues 23–25 (DLN), Arg38, 61–64 (HFGR), Arg120, and Arg153 each bind substrate. ATP is bound by residues Lys203, Glu325, and 355–358 (GGDT).

Belongs to the phosphoglycerate kinase family. As to quaternary structure, monomer.

It localises to the cytoplasm. The catalysed reaction is (2R)-3-phosphoglycerate + ATP = (2R)-3-phospho-glyceroyl phosphate + ADP. The protein operates within carbohydrate degradation; glycolysis; pyruvate from D-glyceraldehyde 3-phosphate: step 2/5. This is Phosphoglycerate kinase from Rhizobium leguminosarum bv. trifolii (strain WSM2304).